The primary structure comprises 693 residues: MA3 DOMAIN-CONTAINING TRANSLATION REGULATORY FACTOR 2 (693 aa).

The segment at 25-60 (SLDPLPQANMAEDLTKSRRHSPIKVEGSEETWGVED) is disordered. The MI 1 domain maps to 90 to 211 (EYKKKATVIV…PPAFLKKQMK (122 aa)). The Nuclear localization signal 1 motif lies at 241–248 (EKRWGGTD). 3 MI domains span residues 254-375 (DVKA…SLSA), 389-510 (VFKD…EVLN), and 560-681 (EVKE…EDSQ). A Nuclear localization signal 2 motif is present at residues 430–437 (VKYLITLA). The interval 673-693 (ESFASEDSQSKKQNGSSSSSG) is disordered. Low complexity predominate over residues 683–693 (KKQNGSSSSSG).

This sequence belongs to the PDCD4 family. Binds to EIF4A1. The association with ribosomes is modulated by cellular energy status and TOR activity. As to expression, mostly expressed in reproductive tissues, such as flower buds and flowers, and, to a lower extent, in vegetative tissues, such as leaves, roots and stems.

Its subcellular location is the nucleus. The protein resides in the cytoplasm. The protein localises to the cytosol. Its function is as follows. Involved in target of rapamycin (TOR)-regulated translation control, especially under energy-deficient conditions. The polypeptide is MA3 DOMAIN-CONTAINING TRANSLATION REGULATORY FACTOR 2 (Arabidopsis thaliana (Mouse-ear cress)).